The chain runs to 404 residues: Phosphopentomutase (404 aa).

6 residues coordinate Mn(2+): aspartate 10, aspartate 297, histidine 302, aspartate 338, histidine 339, and histidine 350.

This sequence belongs to the phosphopentomutase family. Mn(2+) is required as a cofactor.

It localises to the cytoplasm. It catalyses the reaction 2-deoxy-alpha-D-ribose 1-phosphate = 2-deoxy-D-ribose 5-phosphate. The catalysed reaction is alpha-D-ribose 1-phosphate = D-ribose 5-phosphate. Its pathway is carbohydrate degradation; 2-deoxy-D-ribose 1-phosphate degradation; D-glyceraldehyde 3-phosphate and acetaldehyde from 2-deoxy-alpha-D-ribose 1-phosphate: step 1/2. Its function is as follows. Isomerase that catalyzes the conversion of deoxy-ribose 1-phosphate (dRib-1-P) and ribose 1-phosphate (Rib-1-P) to deoxy-ribose 5-phosphate (dRib-5-P) and ribose 5-phosphate (Rib-5-P), respectively. In Colwellia psychrerythraea (strain 34H / ATCC BAA-681) (Vibrio psychroerythus), this protein is Phosphopentomutase.